The primary structure comprises 331 residues: Holliday junction branch migration complex subunit RuvB (331 aa).

The large ATPase domain (RuvB-L) stretch occupies residues 1–186 (MAKTMMQDRL…FGIVQRLEFY (186 aa)). ATP is bound by residues isoleucine 25, arginine 26, glycine 67, lysine 70, threonine 71, threonine 72, 133–135 (EDF), arginine 176, tyrosine 186, and arginine 223. Threonine 71 is a binding site for Mg(2+). Positions 187–257 (NIADLTTIVS…IAGSALDMLA (71 aa)) are small ATPAse domain (RuvB-S). The interval 260–331 (RRGLDHLDRR…LTQMAIDQML (72 aa)) is head domain (RuvB-H). Residues arginine 296, arginine 315, and arginine 320 each contribute to the DNA site.

The protein belongs to the RuvB family. Homohexamer. Forms an RuvA(8)-RuvB(12)-Holliday junction (HJ) complex. HJ DNA is sandwiched between 2 RuvA tetramers; dsDNA enters through RuvA and exits via RuvB. An RuvB hexamer assembles on each DNA strand where it exits the tetramer. Each RuvB hexamer is contacted by two RuvA subunits (via domain III) on 2 adjacent RuvB subunits; this complex drives branch migration. In the full resolvosome a probable DNA-RuvA(4)-RuvB(12)-RuvC(2) complex forms which resolves the HJ.

The protein resides in the cytoplasm. It carries out the reaction ATP + H2O = ADP + phosphate + H(+). Functionally, the RuvA-RuvB-RuvC complex processes Holliday junction (HJ) DNA during genetic recombination and DNA repair, while the RuvA-RuvB complex plays an important role in the rescue of blocked DNA replication forks via replication fork reversal (RFR). RuvA specifically binds to HJ cruciform DNA, conferring on it an open structure. The RuvB hexamer acts as an ATP-dependent pump, pulling dsDNA into and through the RuvAB complex. RuvB forms 2 homohexamers on either side of HJ DNA bound by 1 or 2 RuvA tetramers; 4 subunits per hexamer contact DNA at a time. Coordinated motions by a converter formed by DNA-disengaged RuvB subunits stimulates ATP hydrolysis and nucleotide exchange. Immobilization of the converter enables RuvB to convert the ATP-contained energy into a lever motion, pulling 2 nucleotides of DNA out of the RuvA tetramer per ATP hydrolyzed, thus driving DNA branch migration. The RuvB motors rotate together with the DNA substrate, which together with the progressing nucleotide cycle form the mechanistic basis for DNA recombination by continuous HJ branch migration. Branch migration allows RuvC to scan DNA until it finds its consensus sequence, where it cleaves and resolves cruciform DNA. This is Holliday junction branch migration complex subunit RuvB from Psychrobacter cryohalolentis (strain ATCC BAA-1226 / DSM 17306 / VKM B-2378 / K5).